Consider the following 533-residue polypeptide: Acyl-CoA-binding domain-containing protein 5 (533 aa).

The ACB domain maps to 42-131 (HETRFEAAVK…MKKILETMPM (90 aa)). Residues 53–62 (IQSLPKNGSF), 73–77 (YSFYK), Lys99, and Tyr118 each bind an acyl-CoA. The tract at residues 182–227 (TPNAKTVNGKAESSDSGAESEEEAAQEDPKRPEPRDSDKKMMKKSA) is disordered. Phosphoserine occurs at positions 194, 195, 197, and 201. Positions 208-227 (EDPKRPEPRDSDKKMMKKSA) are enriched in basic and acidic residues. Phosphoserine occurs at positions 244 and 314. Residues 339-443 (GGNPSQPLES…ERWGSDRGSR (105 aa)) form a disordered region. Residues 374–383 (GKGEVKRGGE) are compositionally biased toward basic and acidic residues. Ser429 bears the Phosphoserine mark. Residues 432–442 (DGERWGSDRGS) show a composition bias toward basic and acidic residues. Positions 448–478 (EQIALVLMRLQEDMQNVLQRLHKLEMLAASQ) form a coiled coil. At Lys470 the chain carries N6-acetyllysine. Residues 503–525 (SPGALTFAIIWPFIAQWLVHLYY) traverse the membrane as a helical segment.

The protein belongs to the ATG37 family. Highly expressed in brain and liver. Lower levels of expression in spleen and heart.

It localises to the peroxisome membrane. Its function is as follows. Acyl-CoA binding protein which acts as the peroxisome receptor for pexophagy but is dispensable for aggrephagy and nonselective autophagy. Binds medium- and long-chain acyl-CoA esters. This chain is Acyl-CoA-binding domain-containing protein 5 (ACBD5), found in Bos taurus (Bovine).